We begin with the raw amino-acid sequence, 997 residues long: Mannuronan C5-epimerase AlgE5 (997 aa).

PbH1 repeat units follow at residues 133 to 155, 157 to 179, 180 to 202, 204 to 226, 257 to 279, 280 to 315, and 320 to 359; these read DRDV…DPHE, TINL…VADF, QIGG…NIVT, TNDF…VIQR, AHDV…RVYG, AEDV…GVSG, and TTGT…SVSN. Hemolysin-type calcium-binding repeat units follow at residues 388–403, 406–422, 424–439, 557–573, 574–590, 695–709, 712–729, 828–839, 846–862, and 864–880; these read GTTG…AHET, GLDG…NDIL, GGAG…GADL, GHAG…DDIL, VGGA…GADL, GSAG…AADE, HGGA…ADVF, GSDGNDTLDGGS, GGAG…NDIL, and GGAG…SDIF.

The protein belongs to the D-mannuronate C5-epimerase family. Requires Ca(2+) as cofactor.

The protein resides in the secreted. The enzyme catalyses [(1-&gt;4)-beta-D-mannuronosyl](n) = [alginate](n). It functions in the pathway glycan biosynthesis; alginate biosynthesis. Inhibited by zinc. Functionally, converts beta-D-mannuronic acid (M) to alpha-L-guluronic acid (G), producing a polymer with gel-forming capacity, required for the formation of the cyst coat. The sequence is that of Mannuronan C5-epimerase AlgE5 from Azotobacter vinelandii.